Consider the following 220-residue polypeptide: 7-cyano-7-deazaguanine synthase (220 aa).

10-20 (FSGGQDSTTCL) provides a ligand contact to ATP. Positions 186, 195, 198, and 201 each coordinate Zn(2+).

The protein belongs to the QueC family. As to quaternary structure, homodimer. Zn(2+) serves as cofactor.

It catalyses the reaction 7-carboxy-7-deazaguanine + NH4(+) + ATP = 7-cyano-7-deazaguanine + ADP + phosphate + H2O + H(+). It functions in the pathway purine metabolism; 7-cyano-7-deazaguanine biosynthesis. Functionally, catalyzes the ATP-dependent conversion of 7-carboxy-7-deazaguanine (CDG) to 7-cyano-7-deazaguanine (preQ(0)). This is 7-cyano-7-deazaguanine synthase from Bacillus cereus (strain B4264).